Reading from the N-terminus, the 267-residue chain is Rhomboid-type serine protease 2 (267 aa).

Transmembrane regions (helical) follow at residues 20–40 (LPLF…ASLQ), 67–87 (FPLI…LTPL), 99–119 (TSLA…YVLI), 126–146 (ANHG…MESI), 155–179 (FVIG…AALI), and 185–206 (LGHL…KLLA). Ser134 acts as the Nucleophile in catalysis. His187 is an active-site residue. A disordered region spans residues 247–267 (RPGPSGSAATELVGTTQRLGP).

It belongs to the peptidase S54 family.

It localises to the golgi apparatus membrane. The protein localises to the golgi apparatus. Its subcellular location is the cis-Golgi network membrane. The catalysed reaction is Cleaves type-1 transmembrane domains using a catalytic dyad composed of serine and histidine that are contributed by different transmembrane domains.. Probable rhomboid-type serine protease that catalyzes intramembrane proteolysis. The protein is Rhomboid-type serine protease 2 (RBD2) of Gibberella zeae (strain ATCC MYA-4620 / CBS 123657 / FGSC 9075 / NRRL 31084 / PH-1) (Wheat head blight fungus).